Consider the following 458-residue polypeptide: UDP-N-acetylmuramate--L-alanine ligase (458 aa).

118 to 124 is an ATP binding site; sequence GTHGKTT.

This sequence belongs to the MurCDEF family.

The protein resides in the cytoplasm. The enzyme catalyses UDP-N-acetyl-alpha-D-muramate + L-alanine + ATP = UDP-N-acetyl-alpha-D-muramoyl-L-alanine + ADP + phosphate + H(+). Its pathway is cell wall biogenesis; peptidoglycan biosynthesis. Functionally, cell wall formation. The chain is UDP-N-acetylmuramate--L-alanine ligase from Clostridium botulinum (strain ATCC 19397 / Type A).